The sequence spans 187 residues: UPF0200 protein MA_4660 (187 aa).

9–16 is a binding site for ATP; it reads GMPASGKS.

Belongs to the UPF0200 family.

This Methanosarcina acetivorans (strain ATCC 35395 / DSM 2834 / JCM 12185 / C2A) protein is UPF0200 protein MA_4660.